A 934-amino-acid chain; its full sequence is 3-hydroxy-3-methylglutaryl-coenzyme A reductase (934 aa).

The Lumenal segment spans residues 1-111 (MFYHGASANQ…VLNLVRGAET (111 aa)). The helical transmembrane segment at 112–132 (FDIALVTCAYIAMFYTLFNLF) threads the bilayer. Positions 113-280 (DIALVTCAYI…STFLSAILSL (168 aa)) constitute an SSD domain. The Cytoplasmic segment spans residues 133–141 (ARMRAVGSK). Residues 142-162 (VWLGLSTLVSSFFAFLFALYI) form a helical membrane-spanning segment. The Lumenal portion of the chain corresponds to 163-168 (TTRVLD). The helical transmembrane segment at 169-189 (LSIPFLSLSEGIPFFVAVVGF) threads the bilayer. At 190-231 (NNKILLAEKVLQNQLNAQSSKNDAPTVLYQALREQGPLLLRD) the chain is on the cytoplasmic side. The helical transmembrane segment at 232–252 (HLFMITAFLGCSFYASYLDGL) threads the bilayer. Topologically, residues 253–256 (KNFC) are lumenal. A helical transmembrane segment spans residues 257-277 (ILAALILAFDILTTSTFLSAI). The Cytoplasmic segment spans residues 278 to 334 (LSLKLEINQIHRSTLLREQLEDDGLTETTVDDVLKSNSLAGTKTFTDAPSTLVTVAK). The chain crosses the membrane as a helical span at residues 335-355 (VAGVSVFFGLHFYGFGSAWLS). The Lumenal portion of the chain corresponds to 356–421 (DLSAGNETND…GLISTAARDK (66 aa)). N-linked (GlcNAc...) asparagine glycans are attached at residues N361, N364, and N382. A helical membrane pass occupies residues 422-442 (YISKFILFAFAVSASINVYLL). Residues 443-934 (NVARIHTTRL…MQHNRAAAKK (492 aa)) lie on the Cytoplasmic side of the membrane. The active-site Charge relay system is the E618. Residue 624-630 (SAMRGCK) coordinates CoA. NADP(+) is bound by residues 685-687 (SRF) and 712-720 (DAMGMNMIS). K752 functions as the Charge relay system in the catalytic mechanism. A CoA-binding site is contributed by 781–783 (VLK). D828 serves as the catalytic Charge relay system. 923 to 924 (SH) provides a ligand contact to CoA. The active-site Proton donor is H924. 928–929 (NR) is an NADP(+) binding site.

It belongs to the HMG-CoA reductase family.

It is found in the endoplasmic reticulum membrane. The enzyme catalyses (R)-mevalonate + 2 NADP(+) + CoA = (3S)-3-hydroxy-3-methylglutaryl-CoA + 2 NADPH + 2 H(+). It functions in the pathway metabolic intermediate biosynthesis; (R)-mevalonate biosynthesis; (R)-mevalonate from acetyl-CoA: step 3/3. HMG-CoA reductase; part of the first module of ergosterol biosynthesis pathway that includes the early steps of the pathway, conserved across all eukaryotes, and which results in the formation of mevalonate from acetyl-coenzyme A (acetyl-CoA). In this module, the cytosolic acetyl-CoA acetyltransferase catalyzes the formation of acetoacetyl-CoA. The hydroxymethylglutaryl-CoA synthase then condenses acetyl-CoA with acetoacetyl-CoA to form HMG-CoA. The rate-limiting step of the early module is the reduction to mevalonate by the 3-hydroxy-3-methylglutaryl-coenzyme A (HMG-CoA) reductase. This is 3-hydroxy-3-methylglutaryl-coenzyme A reductase from Cyberlindnera jadinii (Torula yeast).